The primary structure comprises 908 residues: 26S proteasome non-ATPase regulatory subunit 2 (908 aa).

The residue at position 1 (Met-1) is an N-acetylmethionine. Residues 1 to 51 are disordered; sequence MEEGGRDKTPVQSQQPSATAPSGADEKSSGKERRDAGEKDKEQELSEEDKQ. A Phosphothreonine modification is found at Thr-9. Residues 10–20 show a composition bias toward polar residues; it reads PVQSQQPSATA. The span at 24–51 shows a compositional bias: basic and acidic residues; the sequence is ADEKSSGKERRDAGEKDKEQELSEEDKQ. Phosphoserine is present on residues Ser-29 and Ser-147. Residue Tyr-194 is modified to Phosphotyrosine. A phosphoserine mark is found at Ser-361 and Ser-363. PC repeat units lie at residues 409–442, 443–479, 480–514, 517–551, and 560–589; these read SAAA…YIKS, GALL…TMRL, GSIF…SMEV, VTAL…TELK, and LGLG…PFRS. Lys-551 is subject to N6-acetyllysine. Basic and acidic residues predominate over residues 623-643; the sequence is KEKEEDKDKKEKKDKDKKEAP. A disordered region spans residues 623–645; sequence KEKEEDKDKKEKKDKDKKEAPAD. 2 PC repeats span residues 692–723 and 742–757; these read LALA…EVSY and AAML…KDPN. Residues 708 to 903 form a required for interaction with UBLCP1 region; the sequence is DTLSKFSHDA…LEGFVILRKN (196 aa).

It belongs to the proteasome subunit S2 family. As to quaternary structure, component of the 19S proteasome regulatory particle complex. The 26S proteasome consists of a 20S core particle (CP) and two 19S regulatory subunits (RP). The regulatory particle is made of a lid composed of 9 subunits, a base containing 6 ATPases and few additional components including PSMD2. Interacts with RPGRIP1L. Interacts with CRY1 in a KDM8-dependent manner. Interacts (via C-terminus) with phosphatase UBLCP1 (via ubiquitin-like domain); the interaction recruits UBLCP1 to the 19S regulatory particle where it dephosphorylates 19S subunit PSMC2/RPT1 which impairs PSMC2 ATPase activity and disrupts 26S proteasome assembly.

Its function is as follows. Component of the 26S proteasome, a multiprotein complex involved in the ATP-dependent degradation of ubiquitinated proteins. This complex plays a key role in the maintenance of protein homeostasis by removing misfolded or damaged proteins, which could impair cellular functions, and by removing proteins whose functions are no longer required. Therefore, the proteasome participates in numerous cellular processes, including cell cycle progression, apoptosis, or DNA damage repair. Functionally, binds to the intracellular domain of tumor necrosis factor type 1 receptor. The binding domain of TRAP1 and TRAP2 resides outside the death domain of TNFR1. The sequence is that of 26S proteasome non-ATPase regulatory subunit 2 (Psmd2) from Rattus norvegicus (Rat).